A 141-amino-acid polypeptide reads, in one-letter code: Protein X (141 aa).

Positions 24-48 are enriched in low complexity; sequence QSSGPPFPRPSAGSAASPASSLSAS. The tract at residues 24-51 is disordered; it reads QSSGPPFPRPSAGSAASPASSLSASDES. Residues 68–113 form a mitochondrial targeting sequence region; sequence PCCLVVTCAELRTMDSTVNFVSWHANRQLGMPSKDLWTPYIRDQLL.

Belongs to the orthohepadnavirus protein X family. As to quaternary structure, may form homodimer. May interact with host CEBPA, CFLAR, CREB1, DDB1, E4F1, HBXIP, HSPD1/HSP60, NFKBIA, POLR2E and SMAD4. Interacts with host SMC5-SMC6 complex and induces its degradation. Interacts with host TRPC4AP; leading to prevent ubiquitination of TRPC4AP. Interacts with host PLSCR1; this interaction promotes ubiquitination and degradation of HBx and impairs HBx-mediated cell proliferation. A fraction may be phosphorylated in insect cells and HepG2 cells, a human hepatoblastoma cell line. Phosphorylated in vitro by host protein kinase C or mitogen-activated protein kinase. N-acetylated in insect cells.

It localises to the host cytoplasm. The protein resides in the host nucleus. Its subcellular location is the host mitochondrion. In terms of biological role, multifunctional protein that plays a role in silencing host antiviral defenses and promoting viral transcription. Does not seem to be essential for HBV infection. May be directly involved in development of cirrhosis and liver cancer (hepatocellular carcinoma). Most of cytosolic activities involve modulation of cytosolic calcium. The effect on apoptosis is controversial depending on the cell types in which the studies have been conducted. May induce apoptosis by localizing in mitochondria and causing loss of mitochondrial membrane potential. May also modulate apoptosis by binding host CFLAR, a key regulator of the death-inducing signaling complex (DISC). Promotes viral transcription by using the host E3 ubiquitin ligase DDB1 to target the SMC5-SMC6 complex to proteasomal degradation. This host complex would otherwise bind to viral episomal DNA, and prevents its transcription. Moderately stimulates transcription of many different viral and cellular transcription elements. Promoters and enhancers stimulated by HBx contain DNA binding sites for NF-kappa-B, AP-1, AP-2, c-EBP, ATF/CREB, or the calcium-activated factor NF-AT. The sequence is that of Protein X from Woodchuck hepatitis B virus (isolate 1) (WHV).